The following is a 327-amino-acid chain: Biotin synthase (327 aa).

One can recognise a Radical SAM core domain in the interval 52–279 (TKVQLSTLVS…ASYVRLSAGR (228 aa)). [4Fe-4S] cluster is bound by residues cysteine 67, cysteine 71, and cysteine 74. [2Fe-2S] cluster contacts are provided by cysteine 111, cysteine 142, cysteine 202, and arginine 274.

It belongs to the radical SAM superfamily. Biotin synthase family. Homodimer. It depends on [4Fe-4S] cluster as a cofactor. [2Fe-2S] cluster serves as cofactor.

The catalysed reaction is (4R,5S)-dethiobiotin + (sulfur carrier)-SH + 2 reduced [2Fe-2S]-[ferredoxin] + 2 S-adenosyl-L-methionine = (sulfur carrier)-H + biotin + 2 5'-deoxyadenosine + 2 L-methionine + 2 oxidized [2Fe-2S]-[ferredoxin]. The protein operates within cofactor biosynthesis; biotin biosynthesis; biotin from 7,8-diaminononanoate: step 2/2. Functionally, catalyzes the conversion of dethiobiotin (DTB) to biotin by the insertion of a sulfur atom into dethiobiotin via a radical-based mechanism. This is Biotin synthase from Chromobacterium violaceum (strain ATCC 12472 / DSM 30191 / JCM 1249 / CCUG 213 / NBRC 12614 / NCIMB 9131 / NCTC 9757 / MK).